The following is a 191-amino-acid chain: Orotate phosphoribosyltransferase (191 aa).

Residue 116–124 (EDVVTTGGS) coordinates 5-phospho-alpha-D-ribose 1-diphosphate. 2 residues coordinate orotate: Thr-120 and Arg-148.

It belongs to the purine/pyrimidine phosphoribosyltransferase family. PyrE subfamily. In terms of assembly, homodimer. Requires Mg(2+) as cofactor.

It catalyses the reaction orotidine 5'-phosphate + diphosphate = orotate + 5-phospho-alpha-D-ribose 1-diphosphate. It functions in the pathway pyrimidine metabolism; UMP biosynthesis via de novo pathway; UMP from orotate: step 1/2. In terms of biological role, catalyzes the transfer of a ribosyl phosphate group from 5-phosphoribose 1-diphosphate to orotate, leading to the formation of orotidine monophosphate (OMP). The chain is Orotate phosphoribosyltransferase from Carboxydothermus hydrogenoformans (strain ATCC BAA-161 / DSM 6008 / Z-2901).